The following is a 245-amino-acid chain: 5'-nucleotidase SurE (245 aa).

A divalent metal cation is bound by residues Asp-8, Asp-9, Ser-39, and Asn-91.

It belongs to the SurE nucleotidase family. Requires a divalent metal cation as cofactor.

It is found in the cytoplasm. It carries out the reaction a ribonucleoside 5'-phosphate + H2O = a ribonucleoside + phosphate. In terms of biological role, nucleotidase that shows phosphatase activity on nucleoside 5'-monophosphates. This is 5'-nucleotidase SurE from Psychromonas ingrahamii (strain DSM 17664 / CCUG 51855 / 37).